A 188-amino-acid polypeptide reads, in one-letter code: Peptidyl-tRNA hydrolase (188 aa).

Y15 contributes to the tRNA binding site. The active-site Proton acceptor is H20. 3 residues coordinate tRNA: F66, N68, and N114.

It belongs to the PTH family. As to quaternary structure, monomer.

The protein localises to the cytoplasm. It catalyses the reaction an N-acyl-L-alpha-aminoacyl-tRNA + H2O = an N-acyl-L-amino acid + a tRNA + H(+). In terms of biological role, hydrolyzes ribosome-free peptidyl-tRNAs (with 1 or more amino acids incorporated), which drop off the ribosome during protein synthesis, or as a result of ribosome stalling. Catalyzes the release of premature peptidyl moieties from peptidyl-tRNA molecules trapped in stalled 50S ribosomal subunits, and thus maintains levels of free tRNAs and 50S ribosomes. This Lactococcus lactis subsp. lactis (strain IL1403) (Streptococcus lactis) protein is Peptidyl-tRNA hydrolase.